The chain runs to 144 residues: Transcriptional regulator MraZ (144 aa).

SpoVT-AbrB domains follow at residues 5–47 and 77–120; these read TYTP…PRAE and TDEQ…DAQA.

It belongs to the MraZ family. Forms oligomers.

The protein localises to the cytoplasm. The protein resides in the nucleoid. In Mycolicibacterium vanbaalenii (strain DSM 7251 / JCM 13017 / BCRC 16820 / KCTC 9966 / NRRL B-24157 / PYR-1) (Mycobacterium vanbaalenii), this protein is Transcriptional regulator MraZ.